The sequence spans 224 residues: MASPSSLCLLAALALISWQAMASDPSPLQDFCVADMHSPVRVNGFACLNPMEVNADHFFKAAKLDTPRKTNKVGSNVTLINVMQIPGLNTLGISIARIDYAPLGQNPPHTHPRATEILTVLEGTLYVGFVTSNPNNTLFSKVLNKGDVFVFPQGLIHFQFNPNPHQPAVAIAALSSQNPGAITIANAVFGSKPPISDEVLAKAFQVEKGTIDWLQAQFWENNHY.

The signal sequence occupies residues 1 to 22; sequence MASPSSLCLLAALALISWQAMA. Residues Cys32 and Cys47 are joined by a disulfide bond. The 151-residue stretch at 62–212 folds into the Cupin type-1 domain; sequence AKLDTPRKTN…AFQVEKGTID (151 aa). Asn76 carries an N-linked (GlcNAc...) asparagine glycan. Mn(2+)-binding residues include His109, His111, and Glu116. The N-linked (GlcNAc...) asparagine glycan is linked to Asn135. His157 lines the Mn(2+) pocket.

It belongs to the germin family. In terms of assembly, oligomer (believed to be a pentamer but probably hexamer).

Its subcellular location is the secreted. It is found in the extracellular space. It localises to the apoplast. Functionally, plays a role in broad-spectrum disease resistance. Probably has no oxalate oxidase activity even if the active site is conserved. In Oryza sativa subsp. japonica (Rice), this protein is Germin-like protein 8-5.